A 111-amino-acid polypeptide reads, in one-letter code: Urease subunit beta (111 aa).

The protein belongs to the urease beta subunit family. As to quaternary structure, heterotrimer of UreA (gamma), UreB (beta) and UreC (alpha) subunits. Three heterotrimers associate to form the active enzyme.

The protein localises to the cytoplasm. It carries out the reaction urea + 2 H2O + H(+) = hydrogencarbonate + 2 NH4(+). It participates in nitrogen metabolism; urea degradation; CO(2) and NH(3) from urea (urease route): step 1/1. In Geobacillus kaustophilus (strain HTA426), this protein is Urease subunit beta.